The following is a 167-amino-acid chain: uncharacterized protein (167 aa).

A helical transmembrane segment spans residues Leu5–Phe27.

Its subcellular location is the membrane. This is an uncharacterized protein from Aquifex aeolicus (strain VF5).